The chain runs to 322 residues: Tetraacyldisaccharide 4'-kinase (322 aa).

54-61 (SVGGTGKT) provides a ligand contact to ATP.

Belongs to the LpxK family.

It catalyses the reaction a lipid A disaccharide + ATP = a lipid IVA + ADP + H(+). Its pathway is glycolipid biosynthesis; lipid IV(A) biosynthesis; lipid IV(A) from (3R)-3-hydroxytetradecanoyl-[acyl-carrier-protein] and UDP-N-acetyl-alpha-D-glucosamine: step 6/6. In terms of biological role, transfers the gamma-phosphate of ATP to the 4'-position of a tetraacyldisaccharide 1-phosphate intermediate (termed DS-1-P) to form tetraacyldisaccharide 1,4'-bis-phosphate (lipid IVA). In Francisella tularensis subsp. tularensis (strain FSC 198), this protein is Tetraacyldisaccharide 4'-kinase.